Here is a 297-residue protein sequence, read N- to C-terminus: Large ribosomal subunit protein uL15m (297 aa).

Residues 1–22 (MAGPVRGAAGPWALDLLRALPR) constitute a mitochondrion transit peptide. The segment at 27–68 (NLRPNPGSRKPERRRRGQRRGRKCGRGHKGERQRGTRPRLGF) is disordered. Residues 37-53 (PERRRRGQRRGRKCGRG) show a composition bias toward basic residues.

This sequence belongs to the universal ribosomal protein uL15 family. As to quaternary structure, component of the mitochondrial ribosome large subunit (39S) which comprises a 16S rRNA and about 50 distinct proteins.

The protein localises to the mitochondrion. The polypeptide is Large ribosomal subunit protein uL15m (MRPL15) (Bos taurus (Bovine)).